A 180-amino-acid polypeptide reads, in one-letter code: Bifunctional protein PyrR 1 (180 aa).

Substrate-binding positions include 39–40 (TR), 103–111 (DDVLFTGRT), arginine 136, and valine 160. The short motif at 99 to 111 (VILVDDVLFTGRT) is the PRPP-binding element.

It belongs to the purine/pyrimidine phosphoribosyltransferase family. PyrR subfamily. Homodimer and homohexamer; in equilibrium.

It carries out the reaction UMP + diphosphate = 5-phospho-alpha-D-ribose 1-diphosphate + uracil. In terms of biological role, regulates transcriptional attenuation of the pyrimidine nucleotide (pyr) operon by binding in a uridine-dependent manner to specific sites on pyr mRNA. This disrupts an antiterminator hairpin in the RNA and favors formation of a downstream transcription terminator, leading to a reduced expression of downstream genes. Functionally, also displays a weak uracil phosphoribosyltransferase activity which is not physiologically significant. The polypeptide is Bifunctional protein PyrR 1 (pyrR1) (Lactiplantibacillus plantarum (strain ATCC BAA-793 / NCIMB 8826 / WCFS1) (Lactobacillus plantarum)).